We begin with the raw amino-acid sequence, 305 residues long: Dioxygenase hkm4 (305 aa).

Fe cation contacts are provided by His140, Asp142, and His216.

Belongs to the PhyH family. Fe cation serves as cofactor.

It participates in secondary metabolite biosynthesis. Functionally, dioxygenase; part of the gene cluster that mediates the biosynthesis of hancockiamides, an unusual new family of N-cinnamoylated piperazines. The NRPS hkm10 and the NmrA-like reductase hkm9 are proposed to convert two molecules of L-Phe to the intermediary piperazine called xenocockiamide A. Xenocockiamide A is then converted to hancockiamide D via a series of hydroxylations and O-methylations. The tyrosinase hkm6 may catalyze an aromatic hydroxylation, then the 2-oxoglutarate-dependent Fe(II) dioxygenase hkm4 and the FAD-dependent phenol hydroxylase hkm7 may catalyze consecutive hydroxylations to install 2 more hydroxy groups, and the methyltransferase hkm8 probably catalyzes two methylations using 2 molecules of S-adenosyl-L-methionine (SAM). The NRPS hkm11 activates and transfers trans-cinnamate supplied by the PAL hkm12 to hancockiamide D and produces hancockiamide A. NRPS Hkm11 has the flexibility to tolerate the bulky hancockiamide G as a substrate and the absence of the acetyl-transferase hkm3 opens up the opportunity for hkm11 to introduce a second N-cinnamoyl moiety. The cytochrome P450 monooxygenase hkm5 catalyzes the methylenedioxy bridge formation, converting hancockiamide A into hancockiamide G. Hkm5 can also convert hancockiamide B into hancockiamide C, and hancockiamide D into hancockiamide H. The N-acetyltransferase hkm3 finally transfers an acetyl group to 1-N of piperazine, converting hancockiamide A into hancockiamide B and hancockiamide G into hancockiamide C. In Aspergillus hancockii, this protein is Dioxygenase hkm4.